The primary structure comprises 523 residues: GMP synthase [glutamine-hydrolyzing] (523 aa).

Residues 8–205 (KILILDFGSQ…VVNICGCETK (198 aa)) form the Glutamine amidotransferase type-1 domain. Catalysis depends on cysteine 85, which acts as the Nucleophile. Residues histidine 179 and glutamate 181 contribute to the active site. Positions 206 to 398 (WTAENIIEDA…LGLPAEMINR (193 aa)) constitute a GMPS ATP-PPase domain. Residue 233–239 (SGGVDSS) participates in ATP binding.

As to quaternary structure, homodimer.

It carries out the reaction XMP + L-glutamine + ATP + H2O = GMP + L-glutamate + AMP + diphosphate + 2 H(+). It functions in the pathway purine metabolism; GMP biosynthesis; GMP from XMP (L-Gln route): step 1/1. Functionally, catalyzes the synthesis of GMP from XMP. This is GMP synthase [glutamine-hydrolyzing] from Haemophilus influenzae (strain PittGG).